The sequence spans 365 residues: Alanine racemase (365 aa).

Lys-32 serves as the catalytic Proton acceptor; specific for D-alanine. Lys-32 bears the N6-(pyridoxal phosphate)lysine mark. Arg-128 is a substrate binding site. Tyr-257 acts as the Proton acceptor; specific for L-alanine in catalysis. Substrate is bound at residue Met-305.

The protein belongs to the alanine racemase family. It depends on pyridoxal 5'-phosphate as a cofactor.

The enzyme catalyses L-alanine = D-alanine. It functions in the pathway amino-acid biosynthesis; D-alanine biosynthesis; D-alanine from L-alanine: step 1/1. Functionally, catalyzes the interconversion of L-alanine and D-alanine. May also act on other amino acids. This chain is Alanine racemase (alr), found in Francisella tularensis subsp. holarctica (strain OSU18).